The sequence spans 228 residues: Upstream activation factor subunit UAF30 (228 aa).

The region spanning 1–56 (MAELNDYSTMIDILLSDMDLETVTTKKVRMALKEVYAIDVESQGKAINKLIRKHLD) is the DEK-C domain. A compositionally biased stretch (basic and acidic residues) spans 89-111 (SKRSSGEEKNDSETKGTHVEKKK). Residues 89–118 (SKRSSGEEKNDSETKGTHVEKKKGTVSKSP) form a disordered region. The SWIB/MDM2 domain maps to 119–195 (ISTRKVTLSK…HKILASHMTE (77 aa)). Residues 209–228 (VRRKEKPIVSDSEQSDTKGI) are disordered. A phosphoserine mark is found at Ser-218, Ser-220, and Ser-223.

As to quaternary structure, component of the UAF (upstream activation factor) complex which consists of UAF30, RRN5, RRN9, RRN10, and histones H3 and H4.

Its subcellular location is the nucleus. It is found in the nucleolus. In terms of biological role, nonessential component of the UAF (upstream activation factor) complex which interacts with the upstream element of the RNA polymerase I promoter and forms a stable preinitiation complex. Together with SPT15/TBP UAF seems to stimulate basal transcription to a fully activated level. UAF30 seems to play a role in silencing transcription by RNA polymerase II. The chain is Upstream activation factor subunit UAF30 (UAF30) from Saccharomyces cerevisiae (strain ATCC 204508 / S288c) (Baker's yeast).